Here is a 152-residue protein sequence, read N- to C-terminus: Interleukin-3 (152 aa).

The signal sequence occupies residues 1 to 19 (MSRLPVLLLLQLLVRPGLQ). Residues asparagine 34 and asparagine 89 are each glycosylated (N-linked (GlcNAc...) asparagine). A disulfide bond links cysteine 35 and cysteine 103.

The protein belongs to the IL-3 family. As to quaternary structure, interacts with IL3RA. Activated T-cells, mast cells, natural killer cells.

It is found in the secreted. In terms of biological role, cytokine secreted predominantly by activated T-lymphocytes as well as mast cells and osteoblastic cells that controls the production and differentiation of hematopoietic progenitor cells into lineage-restricted cells. Also stimulates mature basophils, eosinophils, and monocytes to become functionally activated. In addition, plays an important role in neural cell proliferation and survival. Participates as well in bone homeostasis and inhibits osteoclast differentiation by preventing NF-kappa-B nuclear translocation and activation. Mechanistically, exerts its biological effects through a receptor composed of IL3RA subunit and a signal transducing subunit IL3RB. Receptor stimulation results in the rapid activation of JAK2 kinase activity leading to STAT5-mediated transcriptional program. Alternatively, contributes to cell survival under oxidative stress in non-hematopoietic systems by activating pathways mediated by PI3K/AKT and ERK. The protein is Interleukin-3 of Homo sapiens (Human).